Consider the following 230-residue polypeptide: Putative 14-3-3-like protein GF14-H (230 aa).

Belongs to the 14-3-3 family.

Its function is as follows. Is associated with a DNA binding complex that binds to the G box, a well-characterized cis-acting DNA regulatory element found in plant genes. In Oryza sativa subsp. japonica (Rice), this protein is Putative 14-3-3-like protein GF14-H (GF14H).